We begin with the raw amino-acid sequence, 789 residues long: Probable phosphoketolase 1 (789 aa).

The protein belongs to the XFP family. The cofactor is thiamine diphosphate.

This Rhizobium meliloti (strain 1021) (Ensifer meliloti) protein is Probable phosphoketolase 1.